The following is a 433-amino-acid chain: Apolipoprotein L5 (433 aa).

The interval 346 to 433 (HHRHLPQKAS…GRQAPGRHRQ (88 aa)) is disordered. Residues 359 to 371 (SSSRGRAVRGSRV) are compositionally biased toward low complexity. A compositionally biased stretch (basic residues) spans 422 to 433 (RKGRQAPGRHRQ).

Belongs to the apolipoprotein L family. In terms of tissue distribution, low level of expression; detected in uterus, testis, skeletal muscle and stomach.

It localises to the cytoplasm. Its function is as follows. May affect the movement of lipids in the cytoplasm or allow the binding of lipids to organelles. The sequence is that of Apolipoprotein L5 (APOL5) from Homo sapiens (Human).